We begin with the raw amino-acid sequence, 339 residues long: Phytoene synthase (339 aa).

The protein belongs to the phytoene/squalene synthase family. The cofactor is ATP. Requires Mn(2+) as cofactor. It depends on Mg(2+) as a cofactor.

It functions in the pathway carotenoid biosynthesis; phytoene biosynthesis. In terms of biological role, involved in the biosynthesis of carotenoids. Catalyzes the condensation of two molecules of geranylgeranyl diphosphate (GGPP) to give prephytoene diphosphate (PPPP) and the subsequent rearrangement of the cyclopropylcarbinyl intermediate to yield phytoene. The chain is Phytoene synthase (crtB) from Rhodobacter capsulatus (strain ATCC BAA-309 / NBRC 16581 / SB1003).